The chain runs to 211 residues: Large ribosomal subunit protein bL25 (211 aa).

The protein belongs to the bacterial ribosomal protein bL25 family. CTC subfamily. Part of the 50S ribosomal subunit; part of the 5S rRNA/L5/L18/L25 subcomplex. Contacts the 5S rRNA. Binds to the 5S rRNA independently of L5 and L18.

Its function is as follows. This is one of the proteins that binds to the 5S RNA in the ribosome where it forms part of the central protuberance. The polypeptide is Large ribosomal subunit protein bL25 (Xanthomonas axonopodis pv. citri (strain 306)).